Here is a 128-residue protein sequence, read N- to C-terminus: Azurin (128 aa).

A Plastocyanin-like domain is found at Ala-1–Lys-128. Cu cation-binding residues include His-46, Cys-112, His-117, and Met-121.

It is found in the periplasm. In terms of biological role, transfers electrons from cytochrome c551 to cytochrome oxidase. In Pseudomonas denitrificans, this protein is Azurin.